We begin with the raw amino-acid sequence, 449 residues long: POU domain, class 3, transcription factor 1 (449 aa).

5 disordered regions span residues 1-22, 76-108, 132-152, 184-251, and 393-449; these read MATT…TGPL, GGGG…GGGG, AHHL…HQPQ, GLHH…PSSD, and KRMT…GSVQ. 2 stretches are compositionally biased toward gly residues: residues 11–20 and 93–108; these read GPGGGAGGTG and AGGG…GGGG. Positions 132–143 are enriched in low complexity; it reads AHHLGPAMSPSP. The segment covering 188–197 has biased composition (basic and acidic residues); that stretch reads ALHEDGHEAQ. Residues 218 to 230 are compositionally biased toward low complexity; it reads AGGLHAAAAHLHP. One can recognise a POU-specific domain in the interval 245 to 319; the sequence is EDAPSSDDLE…LLNKWLEETD (75 aa). Positions 337–396 form a DNA-binding region, homeobox; sequence KRKKRTSIEVGVKGALESHFLKCPKPSAHEITGLADSLQLEKEVVRVWFCNRRQKEKRMT. Pro residues predominate over residues 425–434; it reads PSAPPPPPPA.

It belongs to the POU transcription factor family. Class-3 subfamily.

It localises to the nucleus. Its function is as follows. Transcription factor that binds to the octamer motif (5'-ATTTGCAT-3'). Acts as a transcriptional activator when binding cooperatively with SOX4, SOX11, or SOX12 to gene promoters. Acts as a transcriptional repressor of myelin-specific genes. The protein is POU domain, class 3, transcription factor 1 (Pou3f1) of Mus musculus (Mouse).